The primary structure comprises 468 residues: Cysteine--tRNA ligase (468 aa).

Cysteine 29 is a binding site for Zn(2+). The 'HIGH' region signature appears at 31 to 41 (PTVYNYIHIGN). Residues cysteine 209, histidine 234, and glutamate 238 each coordinate Zn(2+). The 'KMSKS' region motif lies at 266-270 (KMSKS). Lysine 269 provides a ligand contact to ATP. Serine 270 is subject to Phosphoserine.

This sequence belongs to the class-I aminoacyl-tRNA synthetase family. As to quaternary structure, monomer. The cofactor is Zn(2+).

It localises to the cytoplasm. It catalyses the reaction tRNA(Cys) + L-cysteine + ATP = L-cysteinyl-tRNA(Cys) + AMP + diphosphate. The sequence is that of Cysteine--tRNA ligase from Oceanobacillus iheyensis (strain DSM 14371 / CIP 107618 / JCM 11309 / KCTC 3954 / HTE831).